A 354-amino-acid chain; its full sequence is Protein-arginine kinase (354 aa).

The region spanning 24 to 254 (IVLSSRIRLA…QQIIQQEKMA (231 aa)) is the Phosphagen kinase C-terminal domain. ATP contacts are provided by residues 27-31 (SSRIR), His92, Arg125, 176-180 (RASVM), and 207-212 (RGIYGE). The short motif at 337 to 342 (RDYRRA) is the RDXXRA motif of the pArg binding pocket involved in allosteric regulation element.

The protein belongs to the ATP:guanido phosphotransferase family.

The catalysed reaction is L-arginyl-[protein] + ATP = N(omega)-phospho-L-arginyl-[protein] + ADP + H(+). Its activity is regulated as follows. Appears to be allosterically activated by the binding of pArg-containing polypeptides to the pArg-binding pocket localized in the C-terminal domain of McsB. In terms of biological role, catalyzes the specific phosphorylation of arginine residues in a large number of proteins. Is part of the bacterial stress response system. Protein arginine phosphorylation has a physiologically important role and is involved in the regulation of many critical cellular processes, such as protein homeostasis, motility, competence, and stringent and stress responses, by regulating gene expression and protein activity. The protein is Protein-arginine kinase of Bacillus thuringiensis subsp. konkukian (strain 97-27).